Here is a 279-residue protein sequence, read N- to C-terminus: Glycerol uptake facilitator protein (279 aa).

Residues 1-8 lie on the Cytoplasmic side of the membrane; sequence MTTAAPTP. Residues 9–37 form a helical membrane-spanning segment; that stretch reads SLFGQCLAEFLGTALLIFFGTGCVAALKV. Over 38-42 the chain is Periplasmic; that stretch reads AGASF. Residues 43–63 form a helical membrane-spanning segment; sequence GLWEISIIWGVGVSMAIYLSA. The Cytoplasmic segment spans residues 64–66; the sequence is GVS. Residues 67–70 lie within the membrane without spanning it; it reads GAHL. Residues 71 to 73 carry the NPA 1 motif; the sequence is NPA. An intramembrane region (helical) is located at residues 71–81; that stretch reads NPAVSIALWLF. Residues 82–87 are Cytoplasmic-facing; it reads AGFEGR. A helical transmembrane segment spans residues 88–111; sequence KLPFYITAQVAGAFCAAALVYTLY. At 112-146 the chain is on the periplasmic side; the sequence is SSLFIEFEQAQNIVRGSQDSLALASVFSTYPHPAL. Residues 147–172 form a helical membrane-spanning segment; it reads SVGQAFLVEVVITAILMAVIMALTDD. Topologically, residues 173 to 180 are cytoplasmic; sequence GNGLPRGP. The helical transmembrane segment at 181–197 threads the bilayer; it reads LAPLLIGLLIAVIGSAM. The Periplasmic segment spans residues 198–201; the sequence is GPLT. The stretch at 202-205 is an intramembrane region; sequence GFAM. The NPA 2 motif lies at 206-208; sequence NPA. The helical intramembrane region spans 206–219; that stretch reads NPARDFGPKLMTYL. The Periplasmic segment spans residues 220-234; the sequence is AGWGPIAFTGGREIP. Residues 235-257 form a helical membrane-spanning segment; sequence YFLVPIFAPILGACLGAGGYRVL. Topologically, residues 258-279 are cytoplasmic; the sequence is IARHLPSAAAPAEAEPEKVRAS.

It belongs to the MIP/aquaporin (TC 1.A.8) family.

It localises to the cell inner membrane. The catalysed reaction is glycerol(in) = glycerol(out). In terms of biological role, mediates glycerol diffusion across the cytoplasmic membrane via a pore-type mechanism. This is Glycerol uptake facilitator protein (glpF) from Pseudomonas aeruginosa (strain ATCC 15692 / DSM 22644 / CIP 104116 / JCM 14847 / LMG 12228 / 1C / PRS 101 / PAO1).